The sequence spans 192 residues: Lumican (192 aa).

LRR repeat units lie at residues 1–23 (LQWLILDHNLLENSKIKGKVFSK), 26–46 (QLKKLHINHNNLTESVGPLPK), 47–68 (SLEDLQLTHNKITKLGSFDGLL), 69–90 (NLTFVHLQHNQLKEDAVSAAFK), 94–114 (SLEYLDLSFNQMSKLPSGLPA), 115–136 (SLLTLYLDNNKISDIPDEYFKR), 139–162 (GLQYLRLSHNELADSGIPGNSFNI), 164–185 (SLVELDLSYNKLKNIPTVNENL), and 186–192 (ENYYLEV).

The protein belongs to the small leucine-rich proteoglycan (SLRP) family. SLRP class II subfamily. As to quaternary structure, binds to laminin. In terms of processing, sulfated on tyrosine residue(s). Post-translationally, contains keratan sulfate.

It localises to the secreted. It is found in the extracellular space. Its subcellular location is the extracellular matrix. This chain is Lumican (LUM), found in Oryctolagus cuniculus (Rabbit).